A 119-amino-acid polypeptide reads, in one-letter code: NADH-quinone oxidoreductase subunit A (119 aa).

3 consecutive transmembrane segments (helical) span residues 9-29, 63-83, and 88-108; these read VLLF…LGYV, LVAI…PWAV, and VGGA…VGFV.

Belongs to the complex I subunit 3 family. As to quaternary structure, NDH-1 is composed of 14 different subunits. Subunits NuoA, H, J, K, L, M, N constitute the membrane sector of the complex.

The protein resides in the cell inner membrane. It catalyses the reaction a quinone + NADH + 5 H(+)(in) = a quinol + NAD(+) + 4 H(+)(out). In terms of biological role, NDH-1 shuttles electrons from NADH, via FMN and iron-sulfur (Fe-S) centers, to quinones in the respiratory chain. The immediate electron acceptor for the enzyme in this species is believed to be ubiquinone. Couples the redox reaction to proton translocation (for every two electrons transferred, four hydrogen ions are translocated across the cytoplasmic membrane), and thus conserves the redox energy in a proton gradient. This chain is NADH-quinone oxidoreductase subunit A, found in Delftia acidovorans (strain DSM 14801 / SPH-1).